Here is a 278-residue protein sequence, read N- to C-terminus: NAD-capped RNA hydrolase NudC (278 aa).

A substrate-binding site is contributed by arginine 84. Residues cysteine 114 and cysteine 117 each coordinate Zn(2+). Residue glutamate 127 coordinates substrate. Zn(2+) contacts are provided by cysteine 132 and cysteine 135. Tyrosine 140 is a substrate binding site. Positions 141–265 constitute a Nudix hydrolase domain; it reads PRLSPSMIVL…IARHLIDLYL (125 aa). Positions 174, 190, and 194 each coordinate a divalent metal cation. The Nudix box signature appears at 175–196; sequence GFVEAGESVEQCVVREVREEVG. Position 208–215 (208–215) interacts with substrate; it reads QNWPFPHS. Glutamate 235 is a binding site for a divalent metal cation. Alanine 257 provides a ligand contact to substrate.

It belongs to the Nudix hydrolase family. NudC subfamily. Homodimer. It depends on Mg(2+) as a cofactor. Mn(2+) serves as cofactor. Zn(2+) is required as a cofactor.

It carries out the reaction a 5'-end NAD(+)-phospho-ribonucleoside in mRNA + H2O = a 5'-end phospho-adenosine-phospho-ribonucleoside in mRNA + beta-nicotinamide D-ribonucleotide + 2 H(+). It catalyses the reaction NAD(+) + H2O = beta-nicotinamide D-ribonucleotide + AMP + 2 H(+). The catalysed reaction is NADH + H2O = reduced beta-nicotinamide D-ribonucleotide + AMP + 2 H(+). Its function is as follows. mRNA decapping enzyme that specifically removes the nicotinamide adenine dinucleotide (NAD) cap from a subset of mRNAs by hydrolyzing the diphosphate linkage to produce nicotinamide mononucleotide (NMN) and 5' monophosphate mRNA. The NAD-cap is present at the 5'-end of some mRNAs and stabilizes RNA against 5'-processing. Has preference for mRNAs with a 5'-end purine. Catalyzes the hydrolysis of a broad range of dinucleotide pyrophosphates. This Pseudomonas aeruginosa (strain LESB58) protein is NAD-capped RNA hydrolase NudC.